Here is a 454-residue protein sequence, read N- to C-terminus: Phosphoglucosamine mutase (454 aa).

S101 (phosphoserine intermediate) is an active-site residue. Mg(2+) is bound by residues S101, D243, D245, and D247. S101 carries the post-translational modification Phosphoserine.

The protein belongs to the phosphohexose mutase family. The cofactor is Mg(2+). In terms of processing, activated by phosphorylation.

The enzyme catalyses alpha-D-glucosamine 1-phosphate = D-glucosamine 6-phosphate. Functionally, catalyzes the conversion of glucosamine-6-phosphate to glucosamine-1-phosphate. The polypeptide is Phosphoglucosamine mutase (Geotalea uraniireducens (strain Rf4) (Geobacter uraniireducens)).